The following is a 391-amino-acid chain: Metal tolerance protein 7 (391 aa).

The disordered stretch occupies residues 1-21; sequence MGSRGRRGGGERETETEEDET. Topologically, residues 1-103 are cytoplasmic; the sequence is MGSRGRRGGG…LRQMAKGERL (103 aa). The helical transmembrane segment at 104 to 124 threads the bilayer; sequence AINLSNIINLILFIGKVLASV. Over 125-134 the chain is Vacuolar; that stretch reads ESLSMAVIAS. Residues 135–155 traverse the membrane as a helical segment; sequence TLDSLLDLLSGFILWFTAHAM. At 156–171 the chain is on the cytoplasmic side; the sequence is KKPNKYSYPIGKRRMQ. The helical transmembrane segment at 172 to 192 threads the bilayer; the sequence is PVGIIVFASVMGTLGFQVLIE. The Vacuolar segment spans residues 193-210; it reads SGRQLITNEHQVFDHRKE. The chain crosses the membrane as a helical span at residues 211-231; it reads LWMIGSMSSVAVVKFFLMLYC. The Cytoplasmic segment spans residues 232–246; that stretch reads RSFKNEIVRAYAQDH. A helical membrane pass occupies residues 247 to 264; sequence FFDVITNSVGLVSALLAV. Over 265–266 the chain is Vacuolar; the sequence is RY. The chain crosses the membrane as a helical span at residues 267–287; that stretch reads KWWMDPVGAILIAVYTITTWA. Topologically, residues 288–391 are cytoplasmic; it reads RTVVENVGTL…THRPEHKAEV (104 aa).

It belongs to the cation diffusion facilitator (CDF) transporter (TC 2.A.4) family. SLC30A subfamily.

The protein resides in the vacuole membrane. Its function is as follows. Involved in sequestration of excess metal in the cytoplasm into vacuoles to maintain metal homeostasis. In Oryza sativa subsp. japonica (Rice), this protein is Metal tolerance protein 7 (MTP7).